A 275-amino-acid polypeptide reads, in one-letter code: Large ribosomal subunit protein uL2c (275 aa).

The interval 28–53 is disordered; it reads TPTKSLTHANHRARGRNHSGSITTRW.

This sequence belongs to the universal ribosomal protein uL2 family. In terms of assembly, part of the 50S ribosomal subunit.

It localises to the plastid. The protein resides in the chloroplast. The protein is Large ribosomal subunit protein uL2c (rpl2) of Nephroselmis olivacea (Green alga).